A 141-amino-acid polypeptide reads, in one-letter code: AsCystatin (141 aa).

An N-terminal signal peptide occupies residues 1 to 26; it reads MVHSQLPVAAPLRLLCALLLLPLATM. The Cystatin domain occupies 29–129; that stretch reads GGLSPRSVTD…CRFQVWSCPW (101 aa). Positions 73-77 match the Secondary area of contact motif; sequence QVVTG. Intrachain disulfides connect Cys-91/Cys-107 and Cys-120/Cys-140.

Belongs to the cystatin family. As to expression, expressed at a low level by the venom gland (at protein level).

It localises to the secreted. Functionally, recombinant AsCystatin inhibits various C1 cysteine proteases including cathepsin L (Ki is 0.89 pM), papain (Ki is 1.74 pM) and cathepsin B (Ki is 0.69 nM). This activity has also been observed in the crude venom. This protein has no toxic activity and its function in the venom is unknown. It may play a role as a housekeeping or regulatory protein. In Austrelaps superbus (Lowland copperhead snake), this protein is AsCystatin.